Here is a 305-residue protein sequence, read N- to C-terminus: Ornithine carbamoyltransferase (305 aa).

Carbamoyl phosphate contacts are provided by residues 48 to 51 (STRT), arginine 99, and 126 to 129 (HPCQ). L-ornithine is bound by residues asparagine 157, aspartate 222, and 226 to 227 (SM). Carbamoyl phosphate-binding positions include 262–263 (CL) and arginine 290.

The protein belongs to the aspartate/ornithine carbamoyltransferase superfamily. OTCase family.

It is found in the cytoplasm. It carries out the reaction carbamoyl phosphate + L-ornithine = L-citrulline + phosphate + H(+). It functions in the pathway amino-acid biosynthesis; L-arginine biosynthesis; L-arginine from L-ornithine and carbamoyl phosphate: step 1/3. Reversibly catalyzes the transfer of the carbamoyl group from carbamoyl phosphate (CP) to the N(epsilon) atom of ornithine (ORN) to produce L-citrulline. In Methanocaldococcus jannaschii (strain ATCC 43067 / DSM 2661 / JAL-1 / JCM 10045 / NBRC 100440) (Methanococcus jannaschii), this protein is Ornithine carbamoyltransferase (argF).